A 137-amino-acid chain; its full sequence is MSEEQVNIKKKEKWGIAHIYSSFNNTIIHITDITGAETISRWSGGMVVKADRDEPSPYAAMLAARRAAEEALEKGIVGVHIRVRAPGGSKSKTPGPGAQAAIRALARAGLKIGRVEDVTPIPHDGTRPKGGRRGRRV.

The interval 116–137 is disordered; the sequence is EDVTPIPHDGTRPKGGRRGRRV.

Belongs to the universal ribosomal protein uS11 family. In terms of assembly, part of the 30S ribosomal subunit.

Its function is as follows. Located on the platform of the 30S subunit. This Pyrococcus furiosus (strain ATCC 43587 / DSM 3638 / JCM 8422 / Vc1) protein is Small ribosomal subunit protein uS11.